The primary structure comprises 26 residues: Hemocyanin subunit 5 (26 aa).

It belongs to the tyrosinase family. Hemocyanin subfamily. Hemolymph.

The protein localises to the secreted. Its subcellular location is the extracellular space. In terms of biological role, hemocyanins are copper-containing oxygen carriers occurring freely dissolved in the hemolymph of many mollusks and arthropods. The chain is Hemocyanin subunit 5 from Maja squinado (Mediterranean spider crab).